Reading from the N-terminus, the 433-residue chain is Dihydroorotase (433 aa).

2 residues coordinate Zn(2+): histidine 63 and histidine 65. Substrate contacts are provided by residues 65–67 (HLR) and asparagine 97. Positions 155, 182, and 235 each coordinate Zn(2+). Asparagine 283 is a substrate binding site. Aspartate 310 is a Zn(2+) binding site. The active site involves aspartate 310. Position 314 (histidine 314) interacts with substrate.

This sequence belongs to the metallo-dependent hydrolases superfamily. DHOase family. Class I DHOase subfamily. Zn(2+) is required as a cofactor.

It carries out the reaction (S)-dihydroorotate + H2O = N-carbamoyl-L-aspartate + H(+). It participates in pyrimidine metabolism; UMP biosynthesis via de novo pathway; (S)-dihydroorotate from bicarbonate: step 3/3. Functionally, catalyzes the reversible cyclization of carbamoyl aspartate to dihydroorotate. The sequence is that of Dihydroorotase from Anaeromyxobacter dehalogenans (strain 2CP-1 / ATCC BAA-258).